Consider the following 342-residue polypeptide: S-adenosyl-L-methionine-dependent tRNA 4-demethylwyosine synthase (342 aa).

Positions 45, 58, and 71 each coordinate [2Fe-2S] cluster. Residues 64 to 312 (YGIHSHRCLQ…VKHLPGYHIE (249 aa)) enclose the Radical SAM core domain. The [4Fe-4S] cluster site is built by Cys81, Cys85, and Cys88.

This sequence belongs to the TYW1 family. As to quaternary structure, monomer. Requires [2Fe-2S] cluster as cofactor. The cofactor is [4Fe-4S] cluster.

It is found in the cytoplasm. The enzyme catalyses N(1)-methylguanosine(37) in tRNA(Phe) + pyruvate + S-adenosyl-L-methionine = 4-demethylwyosine(37) in tRNA(Phe) + 5'-deoxyadenosine + L-methionine + CO2 + H2O. Its function is as follows. Component of the wyosine derivatives biosynthesis pathway that catalyzes the condensation of N-methylguanine with 2 carbon atoms from pyruvate to form the tricyclic 4-demethylwyosine (imG-14) on guanosine-37 of tRNA(Phe). The polypeptide is S-adenosyl-L-methionine-dependent tRNA 4-demethylwyosine synthase (Pyrococcus horikoshii (strain ATCC 700860 / DSM 12428 / JCM 9974 / NBRC 100139 / OT-3)).